A 210-amino-acid chain; its full sequence is 3-hydroxy-3-methylglutaryl-coenzyme A reductase 2 (210 aa).

Residues lysine 21 and aspartate 97 each act as charge relay system in the active site. A helical membrane pass occupies residues 166–186; sequence LLATIVAGSVLAGELSLMSAI. Histidine 195 functions as the Proton donor in the catalytic mechanism. Asparagine 199 is a glycosylation site (N-linked (GlcNAc...) asparagine).

This sequence belongs to the HMG-CoA reductase family.

Its subcellular location is the endoplasmic reticulum membrane. It localises to the mitochondrion membrane. The protein localises to the plastid membrane. The enzyme catalyses (R)-mevalonate + 2 NADP(+) + CoA = (3S)-3-hydroxy-3-methylglutaryl-CoA + 2 NADPH + 2 H(+). It participates in metabolic intermediate biosynthesis; (R)-mevalonate biosynthesis; (R)-mevalonate from acetyl-CoA: step 3/3. Functionally, catalyzes the synthesis of mevalonate. The specific precursor of all isoprenoid compounds present in plants. The sequence is that of 3-hydroxy-3-methylglutaryl-coenzyme A reductase 2 (HMGR2) from Hevea brasiliensis (Para rubber tree).